The sequence spans 105 residues: Phosphoribosyl-AMP cyclohydrolase (105 aa).

Aspartate 72 contacts Mg(2+). Residue cysteine 73 coordinates Zn(2+). Residues aspartate 74 and aspartate 76 each coordinate Mg(2+). Residues cysteine 89 and cysteine 96 each contribute to the Zn(2+) site.

This sequence belongs to the PRA-CH family. As to quaternary structure, homodimer. Requires Mg(2+) as cofactor. The cofactor is Zn(2+).

Its subcellular location is the cytoplasm. It carries out the reaction 1-(5-phospho-beta-D-ribosyl)-5'-AMP + H2O = 1-(5-phospho-beta-D-ribosyl)-5-[(5-phospho-beta-D-ribosylamino)methylideneamino]imidazole-4-carboxamide. It functions in the pathway amino-acid biosynthesis; L-histidine biosynthesis; L-histidine from 5-phospho-alpha-D-ribose 1-diphosphate: step 3/9. Functionally, catalyzes the hydrolysis of the adenine ring of phosphoribosyl-AMP. The chain is Phosphoribosyl-AMP cyclohydrolase from Listeria innocua serovar 6a (strain ATCC BAA-680 / CLIP 11262).